An 89-amino-acid chain; its full sequence is Chromosomal protein MC1a (89 aa).

Protects DNA against thermal denaturation and modulates transcription. The protein is Chromosomal protein MC1a of Methanothrix soehngenii (Methanosaeta concilii).